The following is a 166-amino-acid chain: Putative 4-hydroxy-4-methyl-2-oxoglutarate aldolase (166 aa).

Substrate-binding positions include 74-77 (GDQI) and Arg96. Residue Asp97 participates in a divalent metal cation binding.

This sequence belongs to the class II aldolase/RraA-like family. As to quaternary structure, homotrimer. Requires a divalent metal cation as cofactor.

The catalysed reaction is 4-hydroxy-4-methyl-2-oxoglutarate = 2 pyruvate. It carries out the reaction oxaloacetate + H(+) = pyruvate + CO2. Functionally, catalyzes the aldol cleavage of 4-hydroxy-4-methyl-2-oxoglutarate (HMG) into 2 molecules of pyruvate. Also contains a secondary oxaloacetate (OAA) decarboxylase activity due to the common pyruvate enolate transition state formed following C-C bond cleavage in the retro-aldol and decarboxylation reactions. This Xanthomonas axonopodis pv. citri (strain 306) protein is Putative 4-hydroxy-4-methyl-2-oxoglutarate aldolase.